The following is a 564-amino-acid chain: Type 2 DNA topoisomerase 6 subunit B (564 aa).

Residues asparagine 46, aspartate 78, threonine 99–lysine 100, glycine 109–serine 116, and lysine 471 each bind ATP.

This sequence belongs to the TOP6B family. Homodimer. Heterotetramer of two Top6A and two Top6B chains.

It catalyses the reaction ATP-dependent breakage, passage and rejoining of double-stranded DNA.. Functionally, relaxes both positive and negative superturns and exhibits a strong decatenase activity. This Pyrococcus horikoshii (strain ATCC 700860 / DSM 12428 / JCM 9974 / NBRC 100139 / OT-3) protein is Type 2 DNA topoisomerase 6 subunit B.